The primary structure comprises 24 residues: Protein YriA (24 aa).

The protein is Protein YriA of Escherichia coli (strain K12).